The sequence spans 603 residues: NADH-ubiquinone oxidoreductase chain 5 (603 aa).

A run of 16 helical transmembrane segments spans residues Tyr-4 to Ile-24, Ser-38 to Asp-58, Met-87 to Tyr-107, Leu-122 to Ile-142, Trp-144 to Ala-160, Ala-171 to Leu-191, Thr-211 to Leu-233, Thr-241 to Ile-261, Leu-272 to Ala-292, Ile-301 to Asn-320, Ala-325 to Ile-347, Ser-370 to Tyr-390, Trp-407 to Leu-429, Leu-457 to Thr-477, Ile-482 to Leu-502, and Met-583 to Met-603.

It belongs to the complex I subunit 5 family. In terms of assembly, core subunit of respiratory chain NADH dehydrogenase (Complex I) which is composed of 45 different subunits.

It is found in the mitochondrion inner membrane. It carries out the reaction a ubiquinone + NADH + 5 H(+)(in) = a ubiquinol + NAD(+) + 4 H(+)(out). Functionally, core subunit of the mitochondrial membrane respiratory chain NADH dehydrogenase (Complex I) which catalyzes electron transfer from NADH through the respiratory chain, using ubiquinone as an electron acceptor. Essential for the catalytic activity and assembly of complex I. The sequence is that of NADH-ubiquinone oxidoreductase chain 5 (MT-ND5) from Pan paniscus (Pygmy chimpanzee).